The chain runs to 131 residues: Small ribosomal subunit protein uS8 (131 aa).

Belongs to the universal ribosomal protein uS8 family. In terms of assembly, part of the 30S ribosomal subunit. Contacts proteins S5 and S12.

Its function is as follows. One of the primary rRNA binding proteins, it binds directly to 16S rRNA central domain where it helps coordinate assembly of the platform of the 30S subunit. This is Small ribosomal subunit protein uS8 from Neorickettsia sennetsu (strain ATCC VR-367 / Miyayama) (Ehrlichia sennetsu).